Reading from the N-terminus, the 535-residue chain is Zinc transporter ZIP5 (535 aa).

An N-terminal signal peptide occupies residues 1 to 19 (MGPPVHHLLTGLCVGVALG). Topologically, residues 20–210 (WVGGSVPNLG…PAPPGDVLSA (191 aa)) are extracellular. Asparagine 49 and asparagine 158 each carry an N-linked (GlcNAc...) asparagine glycan. The helical transmembrane segment at 211-231 (LLHSGLAVLFLSLPAPLSLLL) threads the bilayer. Topologically, residues 232-242 (LRLLGPRLLRP) are cytoplasmic. The helical transmembrane segment at 243–263 (VLGFLGALAVGTLCGDALLHL) threads the bilayer. The Extracellular segment spans residues 264–285 (LPHAQGGRHTGPSEQSEEDLGP). Residues 286-306 (GLSVLGGLFLLFMLENTLGLV) traverse the membrane as a helical segment. The Cytoplasmic portion of the chain corresponds to 307 to 439 (RHRGLRPRCC…LLQEGLSFRK (133 aa)). A disordered region spans residues 316–373 (CRNKRDLGEPNPDPEDGSGMVLRPLQAASEPEVQGQRENRQSSPSLAPPGHQGHSHEH). Serine 333 is subject to Phosphoserine. The residue at position 371 (histidine 371) is a Pros-methylhistidine. Residues 440-460 (LLLLSLVSGALGLGGAALGVG) traverse the membrane as a helical segment. Topologically, residues 461 to 465 (LSLGP) are extracellular. A helical membrane pass occupies residues 466-486 (VPLTPWVFGTTAGVFLYVALV). The Cytoplasmic portion of the chain corresponds to 487–503 (DMLPTLLRPPEPLPVFH). A helical transmembrane segment spans residues 504–524 (VLLQGLGLLLGGSLMFTIALL). Over 525-535 (EEQLVPTVPDG) the chain is Extracellular.

It belongs to the ZIP transporter (TC 2.A.5) family. In terms of assembly, homodimer. N-Glycosylated. In terms of processing, methylated at His-371 by METTL9. As to expression, expressed in all stages of eye development and primarily in the sclera and several layers of the retina, including the inner segment, outer plexiform layer and ganglion cell layer. Expressed in pancreas, kidney and the proximal and distal small intestine as well as in the embryonic visceral yolk sac. In the proximal intestine, expression is predominant in the crypts but diminishes toward the apical regions of the villi.

The protein localises to the basolateral cell membrane. The enzyme catalyses Zn(2+)(in) = Zn(2+)(out). Uniporter that transports zinc(2+) into polarized cells of enterocytes, pancreatic acinar and endoderm cells across the basolateral membrane and participates, notably, in zinc excretion from the intestine by the uptake of zinc from the blood into the intestine. The transport mechanism is temperature- and concentration-dependent and saturable. In addition, is also a high affinity copper transporter in vitro. Also may regulate glucose-stimulated insulin secretion (GSIS) in islets primarily through the zinc-activated SIRT1-PPARGC1A axis. Could regulate the BMP/TGF-beta (bone morphogenetic protein/transforming growth factor-beta) signaling pathway and modulates extracellular matrix (ECM) proteins of the sclera. Plays a role in eye development. The sequence is that of Zinc transporter ZIP5 from Mus musculus (Mouse).